Consider the following 92-residue polypeptide: Long neurotoxin 3FTx-Oxy2 (92 aa).

The N-terminal stretch at 1 to 21 (MKTLLLTLVVVTIVCLDLGYT) is a signal peptide. 4 disulfide bridges follow: cysteine 24-cysteine 42, cysteine 35-cysteine 63, cysteine 67-cysteine 79, and cysteine 80-cysteine 85.

The protein belongs to the three-finger toxin family. Long-chain subfamily. Type II alpha-neurotoxin sub-subfamily. As to expression, expressed by the venom gland.

It localises to the secreted. In terms of biological role, binds with high affinity to muscular (alpha-1/CHRNA1) and neuronal (alpha-7/CHRNA7) nicotinic acetylcholine receptor (nAChR) and inhibits acetylcholine from binding to the receptor, thereby impairing neuromuscular and neuronal transmission. This Oxyuranus microlepidotus (Inland taipan) protein is Long neurotoxin 3FTx-Oxy2.